A 188-amino-acid polypeptide reads, in one-letter code: UPF0301 protein XOO1309 (188 aa).

The protein belongs to the UPF0301 (AlgH) family.

This chain is UPF0301 protein XOO1309, found in Xanthomonas oryzae pv. oryzae (strain MAFF 311018).